A 140-amino-acid polypeptide reads, in one-letter code: ATP synthase epsilon chain (140 aa).

Belongs to the ATPase epsilon chain family. F-type ATPases have 2 components, CF(1) - the catalytic core - and CF(0) - the membrane proton channel. CF(1) has five subunits: alpha(3), beta(3), gamma(1), delta(1), epsilon(1). CF(0) has three main subunits: a, b and c.

Its subcellular location is the cell inner membrane. Its function is as follows. Produces ATP from ADP in the presence of a proton gradient across the membrane. This Marinobacter nauticus (strain ATCC 700491 / DSM 11845 / VT8) (Marinobacter aquaeolei) protein is ATP synthase epsilon chain.